The primary structure comprises 75 residues: uncharacterized protein (75 aa).

Residues 49–69 (VDIVAVATTLPFIVAVICIVF) form a helical membrane-spanning segment.

It localises to the host membrane. This is an uncharacterized protein from Saccharolobus islandicus (Sulfolobus islandicus).